Here is a 445-residue protein sequence, read N- to C-terminus: MSTHLTETWEKAINIIKGELTEVSFNTWIKSINPISLENNSLKLAVPNDFTKGILESRYKDLIVNALKLLTSKKYNIDFIVTTEEKIEKNHNNEKSNIVVNDEMSTMLNPKYTFDSFVIGNSNRFAHAASLAVAESPAKAYNPLFIYGGVGLGKTHLMHAIGHYILHNNPKSQVVYVSSEKFTNELINSIKDDKNVEFRNKYRNIDILLVDDIQFIAGKERTQEEFFHTFNALYEANKQIIISSDRPPKEIPTLEDRLRSRFEWGLIADIQAPDFETRMAILKKKADVEKLNIPNEVMVYIATKIKSNIRELEGALIRIVAFSSLTNKEISVDLASEALKDIISSKQTRQVTIDIIQEVVANYYNLKIEDLKSARRTRNIAFPRQIAMYLSRKLTDMSLPKIGEEFGGRDHTTVIHAYEKISNNLKKDESLQNAINDLNKRINQK.

The domain I, interacts with DnaA modulators stretch occupies residues 1–73; sequence MSTHLTETWE…VNALKLLTSK (73 aa). The segment at 73 to 106 is domain II; the sequence is KKYNIDFIVTTEEKIEKNHNNEKSNIVVNDEMST. The segment at 107 to 323 is domain III, AAA+ region; sequence MLNPKYTFDS…GALIRIVAFS (217 aa). Residues Gly151, Gly153, Lys154, and Thr155 each coordinate ATP. The interval 324-445 is domain IV, binds dsDNA; that stretch reads SLTNKEISVD…NDLNKRINQK (122 aa).

The protein belongs to the DnaA family. As to quaternary structure, oligomerizes as a right-handed, spiral filament on DNA at oriC.

Its subcellular location is the cytoplasm. Its function is as follows. Plays an essential role in the initiation and regulation of chromosomal replication. ATP-DnaA binds to the origin of replication (oriC) to initiate formation of the DNA replication initiation complex once per cell cycle. Binds the DnaA box (a 9 base pair repeat at the origin) and separates the double-stranded (ds)DNA. Forms a right-handed helical filament on oriC DNA; dsDNA binds to the exterior of the filament while single-stranded (ss)DNA is stabiized in the filament's interior. The ATP-DnaA-oriC complex binds and stabilizes one strand of the AT-rich DNA unwinding element (DUE), permitting loading of DNA polymerase. After initiation quickly degrades to an ADP-DnaA complex that is not apt for DNA replication. Binds acidic phospholipids. The sequence is that of Chromosomal replication initiator protein DnaA from Clostridium botulinum (strain Loch Maree / Type A3).